A 152-amino-acid polypeptide reads, in one-letter code: Neuromedin-S (152 aa).

An N-terminal signal peptide occupies residues 1–26 (MKHPFPQFPPILVIYCFCMLQIPSSG). 3 consecutive propeptides follow at residues 27 to 69 (ASPP…VYKR), 70 to 105 (FLFHYSRAWKSTHPVNSEFAPVHPLMRLAAKLPSRR), and 106 to 108 (MKR). Asn-144 bears the Asparagine amide mark. A propeptide spanning residues 147–152 (YTDKVQ) is cleaved from the precursor.

It belongs to the NmU family. Expressed in the CNS, spleen and testis. Specifically expressed in the suprachiasmatic nuclei (SCN) of the hypothalamus.

It localises to the secreted. In terms of biological role, implicated in the regulation of circadian rhythms through autocrine and/or paracrine actions. Stimulates the contraction of rectum and elevation of blood pressure. The protein is Neuromedin-S (Nms) of Rattus norvegicus (Rat).